The following is a 602-amino-acid chain: Elongation factor 4 (602 aa).

One can recognise a tr-type G domain in the interval 7 to 189; that stretch reads KKIRNFSIIA…SIVKNVPSPK (183 aa). GTP contacts are provided by residues 19 to 24 and 136 to 139; these read DHGKST and NKID.

This sequence belongs to the TRAFAC class translation factor GTPase superfamily. Classic translation factor GTPase family. LepA subfamily.

Its subcellular location is the cell membrane. The catalysed reaction is GTP + H2O = GDP + phosphate + H(+). Required for accurate and efficient protein synthesis under certain stress conditions. May act as a fidelity factor of the translation reaction, by catalyzing a one-codon backward translocation of tRNAs on improperly translocated ribosomes. Back-translocation proceeds from a post-translocation (POST) complex to a pre-translocation (PRE) complex, thus giving elongation factor G a second chance to translocate the tRNAs correctly. Binds to ribosomes in a GTP-dependent manner. This chain is Elongation factor 4, found in Alkaliphilus oremlandii (strain OhILAs) (Clostridium oremlandii (strain OhILAs)).